Here is a 181-residue protein sequence, read N- to C-terminus: ATP-dependent protease subunit HslV (181 aa).

The active site involves Thr7. Ala166, Cys169, and Thr172 together coordinate Na(+).

This sequence belongs to the peptidase T1B family. HslV subfamily. As to quaternary structure, a double ring-shaped homohexamer of HslV is capped on each side by a ring-shaped HslU homohexamer. The assembly of the HslU/HslV complex is dependent on binding of ATP.

It localises to the cytoplasm. The enzyme catalyses ATP-dependent cleavage of peptide bonds with broad specificity.. With respect to regulation, allosterically activated by HslU binding. Functionally, protease subunit of a proteasome-like degradation complex believed to be a general protein degrading machinery. The sequence is that of ATP-dependent protease subunit HslV from Anaeromyxobacter sp. (strain Fw109-5).